We begin with the raw amino-acid sequence, 100 residues long: Secreted protein of Ly-6 domain 1 (100 aa).

The first 22 residues, 1-22 (MAKCLLLLLLVVLSSLLGLPQA), serve as a signal peptide directing secretion. The UPAR/Ly6 domain occupies 23-100 (LECFQCNRVN…CHDSPLCNKF (78 aa)). 5 cysteine pairs are disulfide-bonded: Cys25-Cys52, Cys28-Cys37, Cys44-Cys70, Cys74-Cys90, and Cys91-Cys97. An N-linked (GlcNAc...) asparagine glycan is attached at Asn60.

In terms of processing, glycosylated. In terms of tissue distribution, expressed in placenta, where it is detected in both fetal tissues (cotyledon and intercotyledon) and maternal tissues (caruncle and intercaruncular endometrium) (at protein level). Expressed in the mesenchyme area of villi in the cotyledon (at protein level). In endometrium, expressed in the luminal epithelium and weakly in the subluminal stroma (at protein level). Detected in trophoblast mononucleate cells (TMCs) (at protein level). Also detected in trophoblast binucleate cells (BNCs). Overall, expression is strongest in fetal tissue and lower in maternal tissue. Not detected in other tissues tested.

The protein localises to the secreted. Its function is as follows. Binds specifically to type I collagen. The sequence is that of Secreted protein of Ly-6 domain 1 from Bos taurus (Bovine).